The primary structure comprises 107 residues: Serine-rich and transmembrane domain-containing protein 1 (107 aa).

Residues Ile-43–Leu-63 form a helical membrane-spanning segment.

Its subcellular location is the membrane. This chain is Serine-rich and transmembrane domain-containing protein 1 (Sertm1), found in Mus musculus (Mouse).